Consider the following 319-residue polypeptide: Acetyl-coenzyme A carboxylase carboxyl transferase subunit alpha (319 aa).

In terms of domain architecture, CoA carboxyltransferase C-terminal spans 35-296 (NIDEEVHRLR…KAQLLADLAD (262 aa)).

Belongs to the AccA family. In terms of assembly, acetyl-CoA carboxylase is a heterohexamer composed of biotin carboxyl carrier protein (AccB), biotin carboxylase (AccC) and two subunits each of ACCase subunit alpha (AccA) and ACCase subunit beta (AccD).

The protein localises to the cytoplasm. It catalyses the reaction N(6)-carboxybiotinyl-L-lysyl-[protein] + acetyl-CoA = N(6)-biotinyl-L-lysyl-[protein] + malonyl-CoA. The protein operates within lipid metabolism; malonyl-CoA biosynthesis; malonyl-CoA from acetyl-CoA: step 1/1. Functionally, component of the acetyl coenzyme A carboxylase (ACC) complex. First, biotin carboxylase catalyzes the carboxylation of biotin on its carrier protein (BCCP) and then the CO(2) group is transferred by the carboxyltransferase to acetyl-CoA to form malonyl-CoA. This is Acetyl-coenzyme A carboxylase carboxyl transferase subunit alpha from Escherichia coli O139:H28 (strain E24377A / ETEC).